A 187-amino-acid polypeptide reads, in one-letter code: Interferon beta (187 aa).

The first 21 residues, 1–21 (MTSRSLLPFVLSLLLPRIIMA), serve as a signal peptide directing secretion. At tyrosine 24 the chain carries Phosphotyrosine. Cysteine 53 and cysteine 162 are disulfide-bonded. N-linked (GlcNAc...) asparagine glycans are attached at residues asparagine 76, asparagine 95, asparagine 132, and asparagine 158.

The protein belongs to the alpha/beta interferon family. Monomer.

The protein localises to the secreted. Functionally, type I interferon cytokine that plays a key role in the innate immune response to infection, developing tumors and other inflammatory stimuli. Signals via binding to high-affinity (IFNAR2) and low-affinity (IFNAR1) heterodimeric receptor, activating the canonical Jak-STAT signaling pathway resulting in transcriptional activation or repression of interferon-regulated genes that encode the effectors of the interferon response, such as antiviral proteins, regulators of cell proliferation and differentiation, and immunoregulatory proteins. Signals mostly via binding to a IFNAR1-IFNAR2 heterodimeric receptor, but can also function with IFNAR1 alone and independently of Jak-STAT pathways. Elicits a wide variety of responses, including antiviral and antibacterial activities, and can regulate the development of B-cells, myelopoiesis and lipopolysaccharide (LPS)-inducible production of tumor necrosis factor. Plays a role in neuronal homeostasis by regulating dopamine turnover and protecting dopaminergic neurons: acts by promoting neuronal autophagy and alpha-synuclein clearance, thereby preventing dopaminergic neuron loss. IFNB1 is more potent than interferon-alpha (IFN-alpha) in inducing the apoptotic and antiproliferative pathways required for control of tumor cell growth. In Tachyglossus aculeatus aculeatus (Southeast Australian short-beaked echidna), this protein is Interferon beta (IFNB1).